The chain runs to 193 residues: dTTP/UTP pyrophosphatase (193 aa).

The active-site Proton acceptor is the aspartate 70.

The protein belongs to the Maf family. YhdE subfamily. The cofactor is a divalent metal cation.

The protein localises to the cytoplasm. The enzyme catalyses dTTP + H2O = dTMP + diphosphate + H(+). It catalyses the reaction UTP + H2O = UMP + diphosphate + H(+). Its function is as follows. Nucleoside triphosphate pyrophosphatase that hydrolyzes dTTP and UTP. May have a dual role in cell division arrest and in preventing the incorporation of modified nucleotides into cellular nucleic acids. The chain is dTTP/UTP pyrophosphatase from Alcanivorax borkumensis (strain ATCC 700651 / DSM 11573 / NCIMB 13689 / SK2).